A 556-amino-acid chain; its full sequence is MSTGLAGILFLASLVIALVAVHVPLGDYMYRVYNTAKDSRAENVVYRLIGADPKAEQTWGAYARSVLAFSAVSLLFLFILQLVQGRLPSALTDPGTPMTPALAWNTAVSFVTNTNWQAYSGESTHGHLVQMAGLAVQNFVSAAVGMAVAIALVRGFARKRTGELGNFWVDLVRGTIRILLPISVIAAILLITGGAIQNFHNYDQVVNTLAGAQQTIPGGPVASQEAIKDLGTNGGGFYNVNSAHPFENPTTWTNWIEIFLLLVIAFSLPRTFGRMVGNKKQGYAIVGVQAVLAVISWSATLFFQLQAHGTVPTAVGAAMEGVEQRFGVANSAVFAASTTLTSTGSVDSFHDSYTSLGGLVLLFNMQLGEVAPGGVGAGLYGILILAVITVFVAGLMVGRTPEYLGKKITPREIKLAATYFLVTPLIVLTGTAVAMAMPGQRAGMLNTGPHGLSEVLYAFTSAANNNGSAFAGITVNTEWYNTALGLAMVFGRFLPIILALALAGSLAQQGKTPPSIGTLPTHRPQFVGMVAGVTLILVALTFLPMLALGPLAEGIH.

A run of 10 helical transmembrane segments spans residues 5-25 (LAGILFLASLVIALVAVHVPL), 65-85 (SVLAFSAVSLLFLFILQLVQG), 133-153 (GLAVQNFVSAAVGMAVAIALV), 176-196 (IRILLPISVIAAILLITGGAI), 249-269 (PTTWTNWIEIFLLLVIAFSLP), 283-303 (YAIVGVQAVLAVISWSATLFF), 377-397 (AGLYGILILAVITVFVAGLMV), 415-435 (LAATYFLVTPLIVLTGTAVAM), 483-503 (ALGLAMVFGRFLPIILALALA), and 526-546 (FVGMVAGVTLILVALTFLPML).

Belongs to the KdpA family. As to quaternary structure, the system is composed of three essential subunits: KdpA, KdpB and KdpC.

Its subcellular location is the cell membrane. Its function is as follows. Part of the high-affinity ATP-driven potassium transport (or Kdp) system, which catalyzes the hydrolysis of ATP coupled with the electrogenic transport of potassium into the cytoplasm. This subunit binds the extracellular potassium ions and delivers the ions to the membrane domain of KdpB through an intramembrane tunnel. The sequence is that of Potassium-transporting ATPase potassium-binding subunit from Mycolicibacterium vanbaalenii (strain DSM 7251 / JCM 13017 / BCRC 16820 / KCTC 9966 / NRRL B-24157 / PYR-1) (Mycobacterium vanbaalenii).